The following is a 1274-amino-acid chain: Protein ECM30 (1274 aa).

Disordered regions lie at residues 23–42 (EDADASSPSRTSSPSPSLSV), 405–439 (RRAVSTSSHDNSSSSHASLPSSSSAAYHTKPQTKP), and 494–517 (SSSSSTTRSNSSTTSNGTSNDTSN). Composition is skewed to low complexity over residues 27 to 42 (ASSPSRTSSPSPSLSV), 409 to 432 (STSSHDNSSSSHASLPSSSSAAYH), and 494 to 515 (SSSSSTTRSNSSTTSNGTSNDT). The residue at position 635 (Ser635) is a Phosphoserine. The segment covering 803–822 (NQQHQNQQQGQNDNRGQNQN) has biased composition (low complexity). Residues 803 to 842 (NQQHQNQQQGQNDNRGQNQNEDPGQENESPTPYLLFNPAS) are disordered. Position 1065 is a phosphoserine (Ser1065). The disordered stretch occupies residues 1100–1149 (HLRSSSSSSSITLEKTTSNSSSIRTRPNSHHVAPETNNNNSTNGNSNNSS). Residues 1110 to 1125 (ITLEKTTSNSSSIRTR) are compositionally biased toward polar residues. The span at 1135–1149 (TNNNNSTNGNSNNSS) shows a compositional bias: low complexity.

It localises to the cytoplasm. Seems to be involved in cell wall organization and biogenesis. This Saccharomyces cerevisiae (strain ATCC 204508 / S288c) (Baker's yeast) protein is Protein ECM30 (ECM30).